The sequence spans 136 residues: Frataxin, mitochondrial (136 aa).

This sequence belongs to the frataxin family. Monomer. Oligomer.

It localises to the mitochondrion. It catalyses the reaction 4 Fe(2+) + O2 + 4 H(+) = 4 Fe(3+) + 2 H2O. Its function is as follows. Promotes the biosynthesis of heme as well as the assembly and repair of iron-sulfur clusters by delivering Fe(2+) to proteins involved in these pathways. May play a role in the protection against iron-catalyzed oxidative stress through its ability to catalyze the oxidation of Fe(2+) to Fe(3+). May be able to store large amounts of the metal in the form of a ferrihydrite mineral by oligomerization. This chain is Frataxin, mitochondrial (frh-1), found in Caenorhabditis elegans.